Reading from the N-terminus, the 1189-residue chain is Ras-specific guanine nucleotide-releasing factor 2 (1189 aa).

The PH 1 domain maps to Glu-22 to Tyr-133. Residues Lys-158–Arg-193 adopt a coiled-coil conformation. The IQ domain occupies Asp-205 to Cys-234. A DH domain is found at Lys-243 to Glu-429. Residues Pro-470–Asp-588 form the PH 2 domain. The 121-residue stretch at Lys-635–Gly-755 folds into the N-terminal Ras-GEF domain. A disordered region spans residues Val-713–Pro-738. Ser-725 and Ser-726 each carry phosphoserine. The residue at position 736 (Ser-736) is a Phosphoserine; by CDK5. Residues Lys-743–Asn-751 form a regulates proteasomal degradation region. Phosphoserine occurs at positions 745 and 749. Residues Leu-757–Pro-817 are disordered. Over residues Ser-762–Ala-776 the composition is skewed to low complexity. Ser-801, Ser-805, and Ser-924 each carry phosphoserine. Residues Ser-954–Arg-1186 enclose the Ras-GEF domain. Residues Ala-1051–Lys-1080 are responsible of the affinity for farnesylated versus geranylgeranylated Ras.

In terms of assembly, homooligomer and heterooligomer with RASGRF1. Interacts with Ras and RAC1. Interacts in a calcium-dependent manner with calmodulin. Interacts with EPB49 and probably CDK5R1. Interacts with the AMPA receptor through GRIA1. Interacts with microtubules. Phosphorylated by CDK5; down-regulates RASGRF2-mediated RAC1 activation. In terms of processing, ubiquitinated upon interaction with Ras. Ubiquitination leads to degradation through the 26S proteasome. As to expression, expressed in brain in the nucleus of the solitary tract. Not observed in the hippocampus (at protein level).

The protein resides in the cytoplasm. It is found in the cell membrane. Its subcellular location is the endoplasmic reticulum membrane. In terms of biological role, functions as a calcium-regulated nucleotide exchange factor activating both Ras and RAC1 through the exchange of bound GDP for GTP. Preferentially activates HRAS in vivo compared to RRAS based on their different types of prenylation. Functions in synaptic plasticity by contributing to the induction of long term potentiation. This Mus musculus (Mouse) protein is Ras-specific guanine nucleotide-releasing factor 2 (Rasgrf2).